Reading from the N-terminus, the 114-residue chain is Iron-sulfur cluster insertion protein ErpA (114 aa).

Residues Cys-42, Cys-106, and Cys-108 each coordinate iron-sulfur cluster.

This sequence belongs to the HesB/IscA family. Homodimer. It depends on iron-sulfur cluster as a cofactor.

Its function is as follows. Required for insertion of 4Fe-4S clusters for at least IspG. The polypeptide is Iron-sulfur cluster insertion protein ErpA (Buchnera aphidicola subsp. Acyrthosiphon pisum (strain APS) (Acyrthosiphon pisum symbiotic bacterium)).